The sequence spans 161 residues: MSKIAGKRLVYFPNITFTLCRGLNLQPKFAVFRVPLHVNKFDVRDYLQHVYNLKVVSVKSRIYQGKLFRNQLGQVKRPQSEKRVIVEMEEPFVYPNAPNDLKDWQEGELLPDGSNVKTLSRYPKVLEQVDMKRVNEELSKLQDKQILESQQKIARLLKKKY.

The N-terminal 34 residues, 1–34 (MSKIAGKRLVYFPNITFTLCRGLNLQPKFAVFRV), are a transit peptide targeting the mitochondrion.

Belongs to the universal ribosomal protein uL23 family. In terms of assembly, component of the mitochondrial large ribosomal subunit (mt-LSU). Mature yeast 74S mitochondrial ribosomes consist of a small (37S) and a large (54S) subunit. The 37S small subunit contains a 15S ribosomal RNA (15S mt-rRNA) and at least 32 different proteins. The 54S large subunit contains a 21S rRNA (21S mt-rRNA) and at least 45 different proteins. uL23m forms the wall of the exit tunnel. Interacts with the C-terminus of OXA1.

The protein resides in the mitochondrion. Its function is as follows. Component of the mitochondrial ribosome (mitoribosome), a dedicated translation machinery responsible for the synthesis of mitochondrial genome-encoded proteins, including at least some of the essential transmembrane subunits of the mitochondrial respiratory chain. The mitoribosomes are attached to the mitochondrial inner membrane and translation products are cotranslationally integrated into the membrane. The protein is Large ribosomal subunit protein uL23m (mrp20) of Schizosaccharomyces pombe (strain 972 / ATCC 24843) (Fission yeast).